The chain runs to 442 residues: O-methyltransferase pgmB (442 aa).

An S-adenosyl-L-methionine-binding site is contributed by D291. H341 functions as the Proton acceptor in the catalytic mechanism.

Belongs to the class I-like SAM-binding methyltransferase superfamily. Cation-independent O-methyltransferase family.

Its pathway is pigment biosynthesis. It functions in the pathway secondary metabolite biosynthesis. O-methyltransferase; part of the gene cluster that mediates the biosynthesis of pleosporalin A, ascomycone A, as well as a third cryptic naphthoquinone derived pigment, all responsible for the coloration of conidia. Specifically methylates position C-6 of the pgmA product 3-acetonyl-1,6,8-trihydroxy-2-naphthaldehyde to yield fusarubinaldehyde. The pathway begins with the biosynthesis of the cyclized heptaketide 3-acetonyl-1,6,8-trihydroxy-2-naphthaldehyde by the NR-PKS pgmA. The C-6 hydroxyl group is further methylated by the O-methyltransferase pgmB to yield fusarubinaldehyde which is in turn oxidized by the cytochrome P450 monooxygenase pgmC at C-9. The C-1 hydroxyl group is then methylated spontaneously. Although pgmE, pgmD and pgmH are essential for the production of pleosporalin A, it is not the case for the 2 other final products and it remains difficult to assign a specific function to each enzyme. PgmF and pgmG seem not to be involved in pigment biosynthesis although they were regulated by the cluster-specific transcription factor pgmR. This chain is O-methyltransferase pgmB, found in Aspergillus terreus.